The sequence spans 78 residues: Small ribosomal subunit protein bS18 (78 aa).

Belongs to the bacterial ribosomal protein bS18 family. In terms of assembly, part of the 30S ribosomal subunit. Forms a tight heterodimer with protein bS6.

Its function is as follows. Binds as a heterodimer with protein bS6 to the central domain of the 16S rRNA, where it helps stabilize the platform of the 30S subunit. In Lactobacillus acidophilus (strain ATCC 700396 / NCK56 / N2 / NCFM), this protein is Small ribosomal subunit protein bS18.